Consider the following 130-residue polypeptide: Phosphomevalonate dehydratase small subunit (130 aa).

Catalysis depends on S62, which acts as the Proton acceptor.

Belongs to the AcnX type II small subunit family. Heterodimer composed of a large subunit (PMDh-L) and a small subunit (PMDh-S).

The enzyme catalyses (R)-5-phosphomevalonate = (2E)-3-methyl-5-phosphooxypent-2-enoate + H2O. It participates in isoprenoid biosynthesis; isopentenyl diphosphate biosynthesis via mevalonate pathway. Its function is as follows. Component of a hydro-lyase that catalyzes the dehydration of mevalonate 5-phosphate (MVA5P) to form trans-anhydromevalonate 5-phosphate (tAHMP). Involved in the archaeal mevalonate (MVA) pathway, which provides fundamental precursors for isoprenoid biosynthesis, such as isopentenyl diphosphate (IPP) and dimethylallyl diphosphate (DMAPP). The polypeptide is Phosphomevalonate dehydratase small subunit (Pyrococcus abyssi (strain GE5 / Orsay)).